Here is a 139-residue protein sequence, read N- to C-terminus: Putative pre-16S rRNA nuclease (139 aa).

This sequence belongs to the YqgF nuclease family.

It is found in the cytoplasm. Its function is as follows. Could be a nuclease involved in processing of the 5'-end of pre-16S rRNA. The polypeptide is Putative pre-16S rRNA nuclease (Rippkaea orientalis (strain PCC 8801 / RF-1) (Cyanothece sp. (strain PCC 8801))).